Consider the following 179-residue polypeptide: MSKTLQSFNLLKWIDENKELLKPPVNNKVIWQDSEFIAMILGGPNRRRDFHVDPSDEFFYQIKGECYVECITEEGKREVVTVKEGDVFMLPAMVPHSPHRVANTYGLVIERKRSQGELEDFVWFCDECNHEMHRVRVQLSDIEKQVKEAIHSFNSNKEIRACKNCGHIMPEEVGEWKCE.

Arg-47 provides a ligand contact to O2. Fe cation is bound by residues His-51, Glu-57, and His-96. Residue Glu-57 coordinates substrate. The substrate site is built by Arg-100 and Glu-110. Fe cation-binding residues include Cys-125, Cys-128, Cys-162, and Cys-165.

This sequence belongs to the 3-HAO family. Fe(2+) is required as a cofactor.

It catalyses the reaction 3-hydroxyanthranilate + O2 = (2Z,4Z)-2-amino-3-carboxymuconate 6-semialdehyde. It participates in cofactor biosynthesis; NAD(+) biosynthesis; quinolinate from L-kynurenine: step 3/3. Catalyzes the oxidative ring opening of 3-hydroxyanthranilate to 2-amino-3-carboxymuconate semialdehyde, which spontaneously cyclizes to quinolinate. The protein is 3-hydroxyanthranilate 3,4-dioxygenase of Bacillus thuringiensis (strain Al Hakam).